A 441-amino-acid chain; its full sequence is Coiled-coil domain-containing protein 91 (441 aa).

The interval Met-1–Asp-16 is GGA1-binding motif. The interval Met-1–Ser-26 is disordered. A phosphoserine mark is found at Ser-43 and Ser-46. Coiled coils occupy residues Ser-130–Ala-209 and Glu-249–Asp-407. The tract at residues Leu-210–Arg-413 is homodimerization.

In terms of assembly, homodimer. Interacts with GGA1, GGA2 and AP1G1. Widely expressed.

It is found in the membrane. The protein resides in the golgi apparatus. It localises to the trans-Golgi network membrane. The protein localises to the trans-Golgi network. Involved in the regulation of membrane traffic through the trans-Golgi network (TGN). Functions in close cooperation with the GGAs in the sorting of hydrolases to lysosomes. The polypeptide is Coiled-coil domain-containing protein 91 (CCDC91) (Homo sapiens (Human)).